The following is a 1818-amino-acid chain: Unconventional myosin-Vb (1818 aa).

The Myosin N-terminal SH3-like domain occupies T8–P60. Residues V21–L40 form a requires for interaction with LIMA1 region. Residues V69–A762 enclose the Myosin motor domain. G163–T170 contributes to the ATP binding site. The tract at residues L641–D663 is actin-binding. 6 consecutive IQ domains span residues F765–S794, L788–A817, R813–I842, V836–A865, M861–V890, and E884–S913. Disordered regions lie at residues L1086 to D1120 and Q1161 to D1188. A compositionally biased stretch (polar residues) spans P1098 to I1118. 2 coiled-coil regions span residues M1140–R1261 and L1313–Q1415. At S1416 the chain carries Phosphoserine. The 278-residue stretch at S1496 to E1773 folds into the Dilute domain.

Belongs to the TRAFAC class myosin-kinesin ATPase superfamily. Myosin family. Component of the CART complex, at least composed of ACTN4, HGS/HRS, MYO5B and TRIM3. Interacts with RAB11FIP2. Interacts with RAB11A and RAB8A. Found in a complex with CFTR and RAB11A. Interacts with NPC1L1. Interacts with LIMA1.

The protein localises to the cytoplasm. May be involved in vesicular trafficking via its association with the CART complex. The CART complex is necessary for efficient transferrin receptor recycling but not for EGFR degradation. Required in a complex with RAB11A and RAB11FIP2 for the transport of NPC1L1 to the plasma membrane. Together with RAB11A participates in CFTR trafficking to the plasma membrane and TF (transferrin) recycling in nonpolarized cells. Together with RAB11A and RAB8A participates in epithelial cell polarization. Together with RAB25 regulates transcytosis. Required for proper localization of bile salt export pump ABCB11 at the apical/canalicular plasma membrane of hepatocytes. In Mus musculus (Mouse), this protein is Unconventional myosin-Vb (Myo5b).